The sequence spans 908 residues: Protein translocase subunit SecA (908 aa).

Residues Gln-87, 105–109, and Asp-513 each bind ATP; that span reads GEGKT. Residues 852–863 show a composition bias toward low complexity; it reads ARRAQAQHATAE. Residues 852–908 are disordered; that stretch reads ARRAQAQHATAENQLADDEAEAASPQTVVRDERKVGRNEPCPCGSGKKYKQCHGKID. 4 residues coordinate Zn(2+): Cys-892, Cys-894, Cys-903, and His-904. Basic residues predominate over residues 898–908; the sequence is KKYKQCHGKID.

Belongs to the SecA family. In terms of assembly, monomer and homodimer. Part of the essential Sec protein translocation apparatus which comprises SecA, SecYEG and auxiliary proteins SecDF-YajC and YidC. It depends on Zn(2+) as a cofactor.

The protein localises to the cell inner membrane. Its subcellular location is the cytoplasm. It carries out the reaction ATP + H2O + cellular proteinSide 1 = ADP + phosphate + cellular proteinSide 2.. Its function is as follows. Part of the Sec protein translocase complex. Interacts with the SecYEG preprotein conducting channel. Has a central role in coupling the hydrolysis of ATP to the transfer of proteins into and across the cell membrane, serving both as a receptor for the preprotein-SecB complex and as an ATP-driven molecular motor driving the stepwise translocation of polypeptide chains across the membrane. This chain is Protein translocase subunit SecA, found in Vibrio atlanticus (strain LGP32) (Vibrio splendidus (strain Mel32)).